Reading from the N-terminus, the 171-residue chain is Peptide deformylase (171 aa).

Residues Cys-87 and His-129 each coordinate Fe cation. The active site involves Glu-130. Position 133 (His-133) interacts with Fe cation.

The protein belongs to the polypeptide deformylase family. Fe(2+) serves as cofactor.

The catalysed reaction is N-terminal N-formyl-L-methionyl-[peptide] + H2O = N-terminal L-methionyl-[peptide] + formate. Functionally, removes the formyl group from the N-terminal Met of newly synthesized proteins. Requires at least a dipeptide for an efficient rate of reaction. N-terminal L-methionine is a prerequisite for activity but the enzyme has broad specificity at other positions. The sequence is that of Peptide deformylase from Pseudothermotoga lettingae (strain ATCC BAA-301 / DSM 14385 / NBRC 107922 / TMO) (Thermotoga lettingae).